We begin with the raw amino-acid sequence, 67 residues long: Large ribosomal subunit protein uL29 (67 aa).

The protein belongs to the universal ribosomal protein uL29 family.

The chain is Large ribosomal subunit protein uL29 from Alkaliphilus oremlandii (strain OhILAs) (Clostridium oremlandii (strain OhILAs)).